We begin with the raw amino-acid sequence, 138 residues long: Acidic phospholipase A2 daboiatoxin A chain (138 aa).

A signal peptide spans Met-1–Gly-16. 7 disulfide bridges follow: Cys-42-Cys-131, Cys-44-Cys-60, Cys-59-Cys-111, Cys-65-Cys-138, Cys-66-Cys-104, Cys-73-Cys-97, and Cys-91-Cys-102. Ca(2+) contacts are provided by Tyr-43, Gly-45, and Gly-47. His-63 is an active-site residue. Asp-64 contributes to the Ca(2+) binding site. Asp-105 is a catalytic residue.

This sequence belongs to the phospholipase A2 family. Group II subfamily. D49 sub-subfamily. As to quaternary structure, heterodimer of A and B chain; non-covalently linked. The acidic protein (B chain) has phospholipase A2 activity and the A chain weakly inhibits the B chain enzymatic activity but potentiates its lethal potency. Requires Ca(2+) as cofactor. In terms of tissue distribution, expressed by the venom gland.

It localises to the secreted. It carries out the reaction a 1,2-diacyl-sn-glycero-3-phosphocholine + H2O = a 1-acyl-sn-glycero-3-phosphocholine + a fatty acid + H(+). In terms of biological role, heterodimer (A and B chains): phospholipase A2 that acts as a presynaptic neurotoxin and shows a PLA2 activity of 1377 umol/min/mg. In vivo, induces edema and produces neurotoxic symptoms in mice. Also exhibits indirect hemolysis, a strong myonecrotic activity and cytotoxicity. PLA2 catalyzes the calcium-dependent hydrolysis of the 2-acyl groups in 3-sn-phosphoglycerides. Monomer: Snake venom phospholipase A2 (PLA2) that shows a PLA2 activity of 578 umol/min/mg. The polypeptide is Acidic phospholipase A2 daboiatoxin A chain (Daboia siamensis (Eastern Russel's viper)).